Consider the following 309-residue polypeptide: Foldase protein PrsA (309 aa).

The first 22 residues, 1–22, serve as a signal peptide directing secretion; it reads MKTRSKLAAGFLTLMSVATLAA. C23 carries the N-palmitoyl cysteine lipid modification. C23 carries the S-diacylglycerol cysteine lipid modification. The region spanning 146–241 is the PpiC domain; the sequence is TPETSVQVIK…TSYYIIKVTD (96 aa).

This sequence belongs to the PrsA family.

It localises to the cell membrane. It carries out the reaction [protein]-peptidylproline (omega=180) = [protein]-peptidylproline (omega=0). Plays a major role in protein secretion by helping the post-translocational extracellular folding of several secreted proteins. This Streptococcus agalactiae serotype V (strain ATCC BAA-611 / 2603 V/R) protein is Foldase protein PrsA.